The sequence spans 465 residues: Ribulose bisphosphate carboxylase large chain (465 aa).

Lysine 4 carries the post-translational modification N6,N6,N6-trimethyllysine. Residues asparagine 113 and threonine 163 each coordinate substrate. Lysine 165 functions as the Proton acceptor in the catalytic mechanism. A substrate-binding site is contributed by lysine 167. Lysine 191, aspartate 193, and glutamate 194 together coordinate Mg(2+). Position 191 is an N6-carboxylysine (lysine 191). Histidine 284 functions as the Proton acceptor in the catalytic mechanism. Substrate contacts are provided by arginine 285, histidine 317, and serine 369.

The protein belongs to the RuBisCO large chain family. Type I subfamily. Heterohexadecamer of 8 large chains and 8 small chains; disulfide-linked. The disulfide link is formed within the large subunit homodimers. The cofactor is Mg(2+). In terms of processing, the disulfide bond which can form in the large chain dimeric partners within the hexadecamer appears to be associated with oxidative stress and protein turnover.

It is found in the plastid. The protein localises to the chloroplast. It carries out the reaction 2 (2R)-3-phosphoglycerate + 2 H(+) = D-ribulose 1,5-bisphosphate + CO2 + H2O. It catalyses the reaction D-ribulose 1,5-bisphosphate + O2 = 2-phosphoglycolate + (2R)-3-phosphoglycerate + 2 H(+). RuBisCO catalyzes two reactions: the carboxylation of D-ribulose 1,5-bisphosphate, the primary event in carbon dioxide fixation, as well as the oxidative fragmentation of the pentose substrate in the photorespiration process. Both reactions occur simultaneously and in competition at the same active site. This Byrsonima crassifolia (Cajuil cimarron) protein is Ribulose bisphosphate carboxylase large chain.